The following is a 254-amino-acid chain: Low affinity immunoglobulin gamma Fc region receptor III-A (254 aa).

The N-terminal stretch at 1 to 20 (MWQLLLPTALLLLVSAGMRA) is a signal peptide. The Extracellular segment spans residues 21-206 (EDLPKAVVFL…SSISSFFPPG (186 aa)). Ig-like C2-type domains follow at residues 24–105 (PKAV…LEVH) and 107–189 (GWLL…VNIT). 2 disulfide bridges follow: Cys47-Cys89 and Cys128-Cys172. The N-linked (GlcNAc...) asparagine glycan is linked to Asn187. Residues 207-229 (YQVSFCLVMVLLFAVDTGLYFSV) form a helical membrane-spanning segment. Topologically, residues 230–254 (KKSVPSSTRDWEDHKFKWSKDPQDK) are cytoplasmic.

Forms a heterooligomeric complex with ITAM-containing signaling subunits, either a homodimer of CD247, a homodimer of FCER1G or a heterodimer of CD247 and FCER1G, to form a functional receptor complex. Interacts (via transmembrane domain) with signaling subunits; this interaction is a prerequisite for receptor complex expression on the cell surface and intracellular signal transduction. Binds the Fc region of antigen-complexed IgG with a preference for IgG1 and IgG3 isotypes. Interacts with CD2; this interaction is involved in NK cell activation and cytotoxicity. Interacts with S100A4; this interaction inhibits PKC-dependent phosphorylation of FCGR3A. In terms of processing, glycosylated. Glycosylation plays an inhibitory role in the interaction with IgG1 and IgG2. Undergoes rapid ectodomain shedding upon NK cell stimulation. The soluble form is produced by a proteolytic cleavage mediated by ADAM17. Repeated stimulation causes receptor shedding, a mechanism that allows for increased NK cell motility and detachment from opsonized target cells while avoiding activation-induced NK cell apoptosis. Lymphocytes and monocytes.

The protein localises to the cell membrane. It localises to the secreted. Functionally, receptor for the invariable Fc fragment of immunoglobulin gamma (IgG). Optimally activated upon binding of clustered antigen-IgG complexes displayed on cell surfaces, triggers lysis of antibody-coated cells, a process known as antibody-dependent cellular cytotoxicity (ADCC). Does not bind free monomeric IgG, thus avoiding inappropriate effector cell activation in the absence of antigenic trigger. Mediates IgG effector functions on natural killer (NK) cells. Binds antigen-IgG complexes generated upon infection and triggers NK cell-dependent cytokine production and degranulation to limit viral load and propagation. Involved in the generation of memory-like adaptive NK cells capable to produce high amounts of IFNG and to efficiently eliminate virus-infected cells via ADCC. Regulates NK cell survival and proliferation, in particular by preventing NK cell progenitor apoptosis. Fc-binding subunit that associates with CD247 and/or FCER1G adapters to form functional signaling complexes. Following the engagement of antigen-IgG complexes, triggers phosphorylation of immunoreceptor tyrosine-based activation motif (ITAM)-containing adapters with subsequent activation of phosphatidylinositol 3-kinase signaling and sustained elevation of intracellular calcium that ultimately drive NK cell activation. The ITAM-dependent signaling coupled to receptor phosphorylation by PKC mediates robust intracellular calcium flux that leads to production of pro-inflammatory cytokines, whereas in the absence of receptor phosphorylation it mainly activates phosphatidylinositol 3-kinase signaling leading to cell degranulation. Costimulates NK cells and trigger lysis of target cells independently of IgG binding. Mediates the antitumor activities of therapeutic antibodies. Upon ligation on monocytes triggers TNFA-dependent ADCC of IgG-coated tumor cells. Mediates enhanced ADCC in response to afucosylated IgGs. This Macaca mulatta (Rhesus macaque) protein is Low affinity immunoglobulin gamma Fc region receptor III-A.